The chain runs to 293 residues: 4-diphosphocytidyl-2-C-methyl-D-erythritol kinase (293 aa).

Residue lysine 23 is part of the active site. 109-119 (PVAAGIGGGSA) lines the ATP pocket. Residue aspartate 151 is part of the active site.

This sequence belongs to the GHMP kinase family. IspE subfamily.

It carries out the reaction 4-CDP-2-C-methyl-D-erythritol + ATP = 4-CDP-2-C-methyl-D-erythritol 2-phosphate + ADP + H(+). The protein operates within isoprenoid biosynthesis; isopentenyl diphosphate biosynthesis via DXP pathway; isopentenyl diphosphate from 1-deoxy-D-xylulose 5-phosphate: step 3/6. Its function is as follows. Catalyzes the phosphorylation of the position 2 hydroxy group of 4-diphosphocytidyl-2C-methyl-D-erythritol. In Rhizorhabdus wittichii (strain DSM 6014 / CCUG 31198 / JCM 15750 / NBRC 105917 / EY 4224 / RW1) (Sphingomonas wittichii), this protein is 4-diphosphocytidyl-2-C-methyl-D-erythritol kinase.